The sequence spans 366 residues: Ribosomal RNA large subunit methyltransferase M (366 aa).

Residues S188, C221–G224, D240, D260, and D277 each bind S-adenosyl-L-methionine. K306 serves as the catalytic Proton acceptor.

It belongs to the class I-like SAM-binding methyltransferase superfamily. RNA methyltransferase RlmE family. RlmM subfamily. Monomer.

The protein localises to the cytoplasm. The enzyme catalyses cytidine(2498) in 23S rRNA + S-adenosyl-L-methionine = 2'-O-methylcytidine(2498) in 23S rRNA + S-adenosyl-L-homocysteine + H(+). Catalyzes the 2'-O-methylation at nucleotide C2498 in 23S rRNA. In Salmonella paratyphi C (strain RKS4594), this protein is Ribosomal RNA large subunit methyltransferase M.